Reading from the N-terminus, the 358-residue chain is B3 domain-containing transcription factor NGA3 (358 aa).

Residues 1–14 (MDLSLAPTTTTSSD) are compositionally biased toward polar residues. A disordered region spans residues 1–45 (MDLSLAPTTTTSSDQEQDRDQELTSNIGASSSSGPSGNNNNLPMM). Over residues 25-45 (SNIGASSSSGPSGNNNNLPMM) the composition is skewed to low complexity. Positions 56–162 (FDKVVTPSDV…KLYIDWRHRP (107 aa)) form a DNA-binding region, TF-B3. The interval 310 to 358 (EIGASSSSSSALRLNLSTDHDDDNDDGDDGDDDQFAKKGKSSLSLNFNP) is disordered. The segment covering 329-342 (HDDDNDDGDDGDDD) has biased composition (acidic residues).

The protein resides in the nucleus. Functionally, regulates lateral organ growth. Functionally redundant with NGA1, NGA2 and NGA4. In Arabidopsis thaliana (Mouse-ear cress), this protein is B3 domain-containing transcription factor NGA3 (NGA3).